Reading from the N-terminus, the 251-residue chain is SRR1-like protein (251 aa).

It belongs to the SRR1 family.

Its subcellular location is the cytoplasm. The protein localises to the nucleus. This is SRR1-like protein from Schizosaccharomyces pombe (strain 972 / ATCC 24843) (Fission yeast).